A 443-amino-acid chain; its full sequence is KH domain-containing, RNA-binding, signal transduction-associated protein 1 (443 aa).

Residues 1–96 (MQRRDDPAAR…LPPSATASVK (96 aa)) are disordered. The segment covering 10–21 (RMSRSSGRSGSM) has biased composition (low complexity). Phosphoserine is present on residues Ser-18, Ser-20, and Ser-29. Thr-33 is subject to Phosphothreonine. Residue Arg-45 is modified to Asymmetric dimethylarginine; by PRMT1. An Asymmetric dimethylarginine; partial; by PRMT1 modification is found at Arg-52. Phosphoserine is present on Ser-58. At Thr-84 the chain carries Phosphothreonine; by MAPK1. Residues Lys-96 and Lys-102 each participate in a glycyl lysine isopeptide (Lys-Gly) (interchain with G-Cter in SUMO2) cross-link. The tract at residues 100–260 (ENKYLPELMA…VKKFLVPDMM (161 aa)) is involved in homodimerization. Ser-113 carries the phosphoserine modification. Lys-139 is covalently cross-linked (Glycyl lysine isopeptide (Lys-Gly) (interchain with G-Cter in SUMO2)). Position 150 is a phosphoserine (Ser-150). A KH domain is found at 171–197 (NFVGKILGPQGNTIKRLQEETGAKISV). Lys-175 bears the N6-acetyllysine; alternate mark. Lys-175 is covalently cross-linked (Glycyl lysine isopeptide (Lys-Gly) (interchain with G-Cter in SUMO2); alternate). Thr-183 is modified (phosphothreonine). Positions 280–293 (PSRGRGVPVRGRGA) are enriched in low complexity. The interval 280–316 (PSRGRGVPVRGRGAAPPPPPVPRGRGVGPPRGALVRG) is disordered. An omega-N-methylarginine mark is found at Arg-282, Arg-284, and Arg-291. Arg-304 is modified (asymmetric dimethylarginine; by PRMT1). Residues 307-316 (GPPRGALVRG) are compositionally biased toward low complexity. Residues Arg-310, Arg-315, Arg-320, and Arg-325 each carry the omega-N-methylarginine; by PRMT1 modification. Arg-320 carries the post-translational modification Dimethylated arginine; in A2780 ovarian carcinoma cell line. A disordered region spans residues 327 to 346 (ATVTRGVPPPPTVRGAPAPR). 2 positions are modified to dimethylated arginine; in A2780 ovarian carcinoma cell line: Arg-331 and Arg-340. Arg-331 carries the post-translational modification Asymmetric dimethylarginine; alternate. Position 331 is an omega-N-methylarginine; by PRMT1; alternate (Arg-331). Arg-340 is subject to Omega-N-methylarginine; by PRMT1. The interaction with HNRNPA1 stretch occupies residues 351-443 (GIQRIPLPPP…AYREHPYGRY (93 aa)). Phosphotyrosine is present on Tyr-387. Ser-390 is subject to Phosphoserine. Positions 400–420 (GHGEVQDSYEAYGQDDWNGTR) are interaction with ZBTB7A. The segment at 411 to 443 (YGQDDWNGTRPSLKAPPARPVKGAYREHPYGRY) is disordered. Lys-432 participates in a covalent cross-link: Glycyl lysine isopeptide (Lys-Gly) (interchain with G-Cter in SUMO2). Over residues 434–443 (AYREHPYGRY) the composition is skewed to basic and acidic residues. 3 positions are modified to phosphotyrosine; by PTK6: Tyr-435, Tyr-440, and Tyr-443.

Belongs to the KHDRBS family. In terms of assembly, self-associates to form homooligomers when bound to RNA, oligomerization appears to be limited when binding to proteins; dimerization increases RNA affinity. Forms a trimeric complex in the nucleus consisting of BANP, HDAC6 and KHDRBS1/SAM68; HDAC6 keeps KHDRBS1 in a deacetylated state which inhibits the inclusion of CD44 alternate exons. The complex is disrupted by MAPK1/MAPK3-mediated phosphorylation of BANP which results in BANP export to the cytoplasm. This facilitates acetylation of KHDRBS1 and CD44 variant exon inclusion. Interacts with KHDRBS3/SLIM-2. Interacts with KHDRBS2/SLIM-1; heterooligomer formation of KHDRBS family proteins may modulate RNA substrate specificity. Interacts with RASA1, LCK, FYN, PTPN6, PLCG1, GRB2, CBL, JAK3, PIK3R, STAT3, APC, HNRNPA1. Interacts with PTK6 (via SH3 and SH2 domains). Forms a complex with ILF2, ILF3, YLPM1, RBMX, NCOA5 and PPP1CA. Does not interact with TPR. Interacts with PRMT1. Binds WBP4/FBP21 (via WW domains), FNBP4/FBP30 (via WW domains). Interacts (via Arg/Gly-rich-flanked Pro-rich regions) with FYN (via the SH3 domain). Interacts with the non-receptor tyrosine kinase SRMS; the interaction leads to phosphorylation of KHDRBS1. Interacts with ZBTB7A; negatively regulates KHDRBS1 splicing activity toward BCL2L1. Post-translationally, tyrosine phosphorylated by several non-receptor tyrosine kinases including LCK, FYN and JAK3. Also tyrosine phosphorylated by the non-receptor tyrosine kinase SRMS in an EGF-dependent manner. Negatively correlates with ability to bind RNA but required for many interactions with proteins. Phosphorylation by PTK6 negatively regulates its RNA binding ability. Phosphorylation by PTK6 at Tyr-440 dictates the nuclear localization of KHDRBS1. Phosphorylation at Tyr-387 disrupts interaction with APC. Phosphorylation at tyrosine residues by FYN inverts activity on modulation of BCL2L1 alternative splicing. In terms of processing, acetylated. Positively correlates with ability to bind RNA. Deacetylated by HDAC6; this regulates alternative splicing by inhibiting the inclusion of CD44 alternate exons. Arginine methylation is required for nuclear localization. Also can affect interaction with other proteins. Inhibits interaction with Src-like SH3 domains, but not interaction with WW domains of WBP4/FBP21 and FNBP4/FBP30. Ubiquitously expressed in all tissue examined. Isoform 1 is expressed at lower levels in brain, skeletal muscle, and liver whereas isoform 3 is intensified in skeletal muscle and in liver.

It is found in the nucleus. The protein resides in the cytoplasm. Its subcellular location is the membrane. Its function is as follows. Recruited and tyrosine phosphorylated by several receptor systems, for example the T-cell, leptin and insulin receptors. Once phosphorylated, functions as an adapter protein in signal transduction cascades by binding to SH2 and SH3 domain-containing proteins. Role in G2-M progression in the cell cycle. Represses CBP-dependent transcriptional activation apparently by competing with other nuclear factors for binding to CBP. Also acts as a putative regulator of mRNA stability and/or translation rates and mediates mRNA nuclear export. Positively regulates the association of constitutive transport element (CTE)-containing mRNA with large polyribosomes and translation initiation. According to some authors, is not involved in the nucleocytoplasmic export of unspliced (CTE)-containing RNA species according to. RNA-binding protein that plays a role in the regulation of alternative splicing and influences mRNA splice site selection and exon inclusion. Binds to RNA containing 5'-[AU]UAA-3' as a bipartite motif spaced by more than 15 nucleotides. Binds poly(A). Can regulate CD44 alternative splicing in a Ras pathway-dependent manner. In cooperation with HNRNPA1 modulates alternative splicing of BCL2L1 by promoting splicing toward isoform Bcl-X(S), and of SMN1. Can regulate alternative splicing of NRXN1 and NRXN3 in the laminin G-like domain 6 containing the evolutionary conserved neurexin alternative spliced segment 4 (AS4) involved in neurexin selective targeting to postsynaptic partners. In a neuronal activity-dependent manner cooperates synergistically with KHDRBS2/SLIM-1 in regulation of NRXN1 exon skipping at AS4. The cooperation with KHDRBS2/SLIM-1 is antagonistic for regulation of NXRN3 alternative splicing at AS4. In terms of biological role, isoform 3, which is expressed in growth-arrested cells only, inhibits S phase. The chain is KH domain-containing, RNA-binding, signal transduction-associated protein 1 from Homo sapiens (Human).